Consider the following 155-residue polypeptide: MVSSCCGSVCSDQGCSQDLCQETCCRPSCCQTTCCRTTCYRPSCCVSSCCRPQCCQSVCCQPTCCRPTCCETTCCHPRCCISSCCRPSCCMSSCCKPQCCQSVCCQPTCCRPSCCRPCCCLRPVCGRVSCHTTCYRPTCVISTCPRPLCCASSCC.

20 tandem repeats follow at residues 5–9 (CCGSV), 24–28 (CCRPS), 29–33 (CCQTT), 34–38 (CCRTT), 44–48 (CCVSS), 49–53 (CCRPQ), 54–58 (CCQSV), 59–63 (CCQPT), 64–68 (CCRPT), 69–73 (CCETT), 74–78 (CCHPR), 79–83 (CCISS), 84–88 (CCRPS), 89–93 (CCMSS), 94–98 (CCKPQ), 99–103 (CCQSV), 104–108 (CCQPT), 109–113 (CCRPS), 114–118 (CCRPC), and 119–123 (CCLRP). Positions 5–123 (CCGSVCSDQG…CCRPCCCLRP (119 aa)) are 20 X 5 AA repeats of C-C-[GIKRQVHEML]-[SPTRV]-[STVQRCP].

The protein belongs to the KRTAP type 4 family. As to quaternary structure, interacts with hair keratins. Expressed in the hair follicles.

In terms of biological role, in the hair cortex, hair keratin intermediate filaments are embedded in an interfilamentous matrix, consisting of hair keratin-associated proteins (KRTAP), which are essential for the formation of a rigid and resistant hair shaft through their extensive disulfide bond cross-linking with abundant cysteine residues of hair keratins. The matrix proteins include the high-sulfur and high-glycine-tyrosine keratins. The polypeptide is Keratin-associated protein 4-7 (KRTAP4-7) (Homo sapiens (Human)).